The primary structure comprises 205 residues: Holliday junction branch migration complex subunit RuvA (205 aa).

The interval 1 to 64 (MIGRLRGLLV…EDAQLLYGFI (64 aa)) is domain I. A domain II region spans residues 65–143 (TKQERALFRL…SLMEASAGSE (79 aa)). A flexible linker region spans residues 144–156 (REFMLKSNYTPAP). The segment at 157-205 (VINTAEEDAIAALLSLGYKPAQASKAVSAVYQDGMDSETLIKSSLKSML) is domain III.

It belongs to the RuvA family. Homotetramer. Forms an RuvA(8)-RuvB(12)-Holliday junction (HJ) complex. HJ DNA is sandwiched between 2 RuvA tetramers; dsDNA enters through RuvA and exits via RuvB. An RuvB hexamer assembles on each DNA strand where it exits the tetramer. Each RuvB hexamer is contacted by two RuvA subunits (via domain III) on 2 adjacent RuvB subunits; this complex drives branch migration. In the full resolvosome a probable DNA-RuvA(4)-RuvB(12)-RuvC(2) complex forms which resolves the HJ.

The protein localises to the cytoplasm. Its function is as follows. The RuvA-RuvB-RuvC complex processes Holliday junction (HJ) DNA during genetic recombination and DNA repair, while the RuvA-RuvB complex plays an important role in the rescue of blocked DNA replication forks via replication fork reversal (RFR). RuvA specifically binds to HJ cruciform DNA, conferring on it an open structure. The RuvB hexamer acts as an ATP-dependent pump, pulling dsDNA into and through the RuvAB complex. HJ branch migration allows RuvC to scan DNA until it finds its consensus sequence, where it cleaves and resolves the cruciform DNA. The chain is Holliday junction branch migration complex subunit RuvA from Shewanella sediminis (strain HAW-EB3).